The sequence spans 621 residues: uncharacterized protein (621 aa).

A phosphoserine mark is found at serine 269, serine 271, serine 274, serine 290, and serine 292. 6 LRR repeats span residues 333 to 354, 357 to 379, 380 to 401, 404 to 425, 426 to 447, and 451 to 472; these read QLLYLRCSSCKLKSIPKNVFLS, SLVSLDLSGNELTEIPYALGELP, QLCSLNLASNKITGCRTFYHIS, HLQILVLSRNHLTSLSGLENVP, SLEKLDIRDNSITDVVEFRRLV, and NFEEAYLSLNPFTKTYSSYRIT. The segment at 552–581 is disordered; that stretch reads SKNASGGDTSSNVSLLNGSASEEIPQNTES.

It is found in the cytoplasm. Its subcellular location is the nucleus. The protein resides in the vacuole membrane. This is an uncharacterized protein from Schizosaccharomyces pombe (strain 972 / ATCC 24843) (Fission yeast).